Reading from the N-terminus, the 181-residue chain is Adenine phosphoribosyltransferase (181 aa).

The protein belongs to the purine/pyrimidine phosphoribosyltransferase family. Homodimer.

It localises to the cytoplasm. It catalyses the reaction AMP + diphosphate = 5-phospho-alpha-D-ribose 1-diphosphate + adenine. The protein operates within purine metabolism; AMP biosynthesis via salvage pathway; AMP from adenine: step 1/1. In terms of biological role, catalyzes a salvage reaction resulting in the formation of AMP, that is energically less costly than de novo synthesis. The polypeptide is Adenine phosphoribosyltransferase (Brucella abortus (strain S19)).